The chain runs to 520 residues: Peptide chain release factor 3 (520 aa).

One can recognise a tr-type G domain in the interval 8–277 (ESRKTFAIIS…HAPMPNARQT (270 aa)). Residues 17-24 (SHPDAGKT), 85-89 (DTPGH), and 139-142 (NKLD) each bind GTP.

Belongs to the TRAFAC class translation factor GTPase superfamily. Classic translation factor GTPase family. PrfC subfamily.

Its subcellular location is the cytoplasm. Functionally, increases the formation of ribosomal termination complexes and stimulates activities of RF-1 and RF-2. It binds guanine nucleotides and has strong preference for UGA stop codons. It may interact directly with the ribosome. The stimulation of RF-1 and RF-2 is significantly reduced by GTP and GDP, but not by GMP. This chain is Peptide chain release factor 3, found in Staphylococcus haemolyticus (strain JCSC1435).